Reading from the N-terminus, the 320-residue chain is tRNA uridine(34) hydroxylase (320 aa).

Residues 123-217 (EDENTVILDA…YGKDPETKGQ (95 aa)) form the Rhodanese domain. The active-site Cysteine persulfide intermediate is cysteine 177.

This sequence belongs to the TrhO family.

It carries out the reaction uridine(34) in tRNA + AH2 + O2 = 5-hydroxyuridine(34) in tRNA + A + H2O. Its function is as follows. Catalyzes oxygen-dependent 5-hydroxyuridine (ho5U) modification at position 34 in tRNAs. The polypeptide is tRNA uridine(34) hydroxylase (Staphylococcus epidermidis (strain ATCC 12228 / FDA PCI 1200)).